The primary structure comprises 232 residues: 7-cyano-7-deazaguanine synthase (232 aa).

An ATP-binding site is contributed by 8–18 (FSGGQDSTTCL). Residues Cys187, Cys196, Cys199, and Cys202 each coordinate Zn(2+).

The protein belongs to the QueC family. It depends on Zn(2+) as a cofactor.

It carries out the reaction 7-carboxy-7-deazaguanine + NH4(+) + ATP = 7-cyano-7-deazaguanine + ADP + phosphate + H2O + H(+). It functions in the pathway purine metabolism; 7-cyano-7-deazaguanine biosynthesis. Catalyzes the ATP-dependent conversion of 7-carboxy-7-deazaguanine (CDG) to 7-cyano-7-deazaguanine (preQ(0)). The chain is 7-cyano-7-deazaguanine synthase from Shewanella denitrificans (strain OS217 / ATCC BAA-1090 / DSM 15013).